The primary structure comprises 401 residues: Heat stress transcription factor A-4a (401 aa).

Residues 13-107 (LPPFLTKTYE…LMKNIHRRKP (95 aa)) mediate DNA binding. The interval 122–188 (PLTDSERVRM…TMVSFVSQVL (67 aa)) is hydrophobic repeat HR-A/B. The Nuclear localization signal signature appears at 207–213 (RKRRFPR). The short motif at 256 to 265 (IAIWENLVSD) is the AHA1 element. Positions 341–350 (DGFWQQFFSE) match the AHA2 motif. The interval 351–373 (NPGSTEQREVQLERKDDKDKAGV) is disordered. Residues 356–373 (EQREVQLERKDDKDKAGV) show a composition bias toward basic and acidic residues. The short motif at 388 to 395 (ITEQLGHL) is the Nuclear export signal element.

This sequence belongs to the HSF family. Class A subfamily. As to quaternary structure, homotrimer. In terms of processing, exhibits temperature-dependent phosphorylation.

The protein localises to the cytoplasm. It is found in the nucleus. In terms of biological role, transcriptional activator that specifically binds DNA sequence 5'-AGAAnnTTCT-3' known as heat shock promoter elements (HSE). This chain is Heat stress transcription factor A-4a (HSFA4A), found in Arabidopsis thaliana (Mouse-ear cress).